A 496-amino-acid polypeptide reads, in one-letter code: Membrane-bound lytic murein transglycosylase F (496 aa).

Residues 1 to 31 form the signal peptide; it reads MPIFSTRVLTYLRCIFRLFIGLTLLLTLVGC. A non-LT domain region spans residues 32–271; it reads DFYTPSSQLE…KLDEKYFGHV (240 aa). The segment at 273 to 496 is LT domain; it reads NFDFVDTRTF…AEVVKQITLR (224 aa). The active site involves E316. A disordered region spans residues 464 to 486; sequence HRREELDDDDSSEPPSAERPTVI.

It in the N-terminal section; belongs to the bacterial solute-binding protein 3 family. In the C-terminal section; belongs to the transglycosylase Slt family.

The protein localises to the cell outer membrane. The enzyme catalyses Exolytic cleavage of the (1-&gt;4)-beta-glycosidic linkage between N-acetylmuramic acid (MurNAc) and N-acetylglucosamine (GlcNAc) residues in peptidoglycan, from either the reducing or the non-reducing ends of the peptidoglycan chains, with concomitant formation of a 1,6-anhydrobond in the MurNAc residue.. Functionally, murein-degrading enzyme that degrades murein glycan strands and insoluble, high-molecular weight murein sacculi, with the concomitant formation of a 1,6-anhydromuramoyl product. Lytic transglycosylases (LTs) play an integral role in the metabolism of the peptidoglycan (PG) sacculus. Their lytic action creates space within the PG sacculus to allow for its expansion as well as for the insertion of various structures such as secretion systems and flagella. The chain is Membrane-bound lytic murein transglycosylase F from Aeromonas hydrophila subsp. hydrophila (strain ATCC 7966 / DSM 30187 / BCRC 13018 / CCUG 14551 / JCM 1027 / KCTC 2358 / NCIMB 9240 / NCTC 8049).